The primary structure comprises 405 residues: Glucose-1-phosphate adenylyltransferase 1 (405 aa).

Residues Tyr-96, Gly-161, 176–177, and Ser-194 each bind alpha-D-glucose 1-phosphate; that span reads EK.

Belongs to the bacterial/plant glucose-1-phosphate adenylyltransferase family. Homotetramer.

The enzyme catalyses alpha-D-glucose 1-phosphate + ATP + H(+) = ADP-alpha-D-glucose + diphosphate. It participates in glycan biosynthesis; glycogen biosynthesis. Its function is as follows. Involved in the biosynthesis of ADP-glucose, a building block required for the elongation reactions to produce glycogen. Catalyzes the reaction between ATP and alpha-D-glucose 1-phosphate (G1P) to produce pyrophosphate and ADP-Glc. The chain is Glucose-1-phosphate adenylyltransferase 1 from Vibrio vulnificus (strain CMCP6).